The sequence spans 940 residues: Chromatin assembly factor 1 subunit FSM (940 aa).

Disordered regions lie at residues 317 to 473 (NVDD…DPCT), 638 to 682 (VDSD…FFVP), and 919 to 940 (KTTQ…PSSQ). Residues 320-329 (DSQLQKNTST) show a composition bias toward polar residues. A coiled-coil region spans residues 329–439 (TNEKDTQKAQ…LKKQLAIQKQ (111 aa)). Basic and acidic residues predominate over residues 330 to 429 (NEKDTQKAQK…QKRREKEAVQ (100 aa)). Low complexity predominate over residues 430–440 (LKKQLAIQKQA). Positions 445–461 (RFFKNKKDSEKLEKPGG) are enriched in basic and acidic residues. The segment covering 638–650 (VDSDDEWEEEDPG) has biased composition (acidic residues).

This sequence belongs to the CHAF1A family. Component of the chromatin assembly factor 1 (CAF-1) complex, composed of FSM (FAS1), FAS2 and MSI1. In terms of tissue distribution, in embryo, expressed in leaf primordia, coleoptile and radicle. In seedlings, expressed in cell division zone of roots, SAM and leaf primordia. Expressed in floral organ primordia.

It localises to the nucleus. Component of the chromatin assembly factor complex (CAF-1) involved in chromatin assembly following DNA replication and DNA repair. Required for several aspects of development, including apical meristem maintenance by regulating the durations of the S- and G2-phases of the cell cycle through its chromatin assembly activity. The protein is Chromatin assembly factor 1 subunit FSM (FSM) of Oryza sativa subsp. japonica (Rice).